Consider the following 73-residue polypeptide: Translation initiation factor IF-1 (73 aa).

The 73-residue stretch at 1 to 73 folds into the S1-like domain; that stretch reads MAKKEDTLVL…TKARVVYRHR (73 aa).

It belongs to the IF-1 family. As to quaternary structure, component of the 30S ribosomal translation pre-initiation complex which assembles on the 30S ribosome in the order IF-2 and IF-3, IF-1 and N-formylmethionyl-tRNA(fMet); mRNA recruitment can occur at any time during PIC assembly.

Its subcellular location is the cytoplasm. One of the essential components for the initiation of protein synthesis. Stabilizes the binding of IF-2 and IF-3 on the 30S subunit to which N-formylmethionyl-tRNA(fMet) subsequently binds. Helps modulate mRNA selection, yielding the 30S pre-initiation complex (PIC). Upon addition of the 50S ribosomal subunit IF-1, IF-2 and IF-3 are released leaving the mature 70S translation initiation complex. The polypeptide is Translation initiation factor IF-1 (Chlamydia pneumoniae (Chlamydophila pneumoniae)).